Here is a 512-residue protein sequence, read N- to C-terminus: Maturase K (512 aa).

This sequence belongs to the intron maturase 2 family. MatK subfamily.

It is found in the plastid. The protein resides in the chloroplast. Its function is as follows. Usually encoded in the trnK tRNA gene intron. Probably assists in splicing its own and other chloroplast group II introns. The chain is Maturase K from Acer platanoides (Norway maple).